The following is a 628-amino-acid chain: uncharacterized protein (628 aa).

Disordered stretches follow at residues 1 to 65 and 80 to 125; these read MDTN…ISSA and SLRN…VSLS. Residues 12–21 are compositionally biased toward low complexity; the sequence is ISPSIASSFP. Positions 25-37 are enriched in polar residues; the sequence is PFSSQNSTTSNPE. 2 stretches are compositionally biased toward low complexity: residues 48-64 and 87-102; these read SSII…NISS and SPHI…SSSS. Basic and acidic residues predominate over residues 103–116; the sequence is DLDKSMLDEKHPDS. 12 helical membrane-spanning segments follow: residues 157 to 177, 203 to 223, 230 to 250, 259 to 279, 294 to 314, 324 to 344, 417 to 437, 454 to 474, 483 to 503, 511 to 531, 542 to 562, and 583 to 603; these read IITC…SISL, VGTG…NLLM, LWLS…AVLG, FIAL…GFAF, IGWY…LSAA, LYGY…QGLF, LWPP…LVNY, VSLL…TVLP, MLFF…TTFV, VGLL…MTWV, VGVA…SVVA, and MCGM…VQKF.

The protein belongs to the major facilitator superfamily. Allantoate permease family.

The protein localises to the membrane. This is an uncharacterized protein from Schizosaccharomyces pombe (strain 972 / ATCC 24843) (Fission yeast).